Here is a 476-residue protein sequence, read N- to C-terminus: Bifunctional protein HldE (476 aa).

Positions 1-319 (MKLTLPDYDQ…EAIYGSQDSG (319 aa)) are ribokinase. 195–198 (NLSE) serves as a coordination point for ATP. Residue Asp264 is part of the active site. Residues 344 to 476 (MTNGCFDILH…IIEAIRGGKG (133 aa)) are cytidylyltransferase.

The protein in the N-terminal section; belongs to the carbohydrate kinase PfkB family. In the C-terminal section; belongs to the cytidylyltransferase family. As to quaternary structure, homodimer.

The enzyme catalyses D-glycero-beta-D-manno-heptose 7-phosphate + ATP = D-glycero-beta-D-manno-heptose 1,7-bisphosphate + ADP + H(+). It catalyses the reaction D-glycero-beta-D-manno-heptose 1-phosphate + ATP + H(+) = ADP-D-glycero-beta-D-manno-heptose + diphosphate. It participates in nucleotide-sugar biosynthesis; ADP-L-glycero-beta-D-manno-heptose biosynthesis; ADP-L-glycero-beta-D-manno-heptose from D-glycero-beta-D-manno-heptose 7-phosphate: step 1/4. Its pathway is nucleotide-sugar biosynthesis; ADP-L-glycero-beta-D-manno-heptose biosynthesis; ADP-L-glycero-beta-D-manno-heptose from D-glycero-beta-D-manno-heptose 7-phosphate: step 3/4. Its function is as follows. Catalyzes the phosphorylation of D-glycero-D-manno-heptose 7-phosphate at the C-1 position to selectively form D-glycero-beta-D-manno-heptose-1,7-bisphosphate. In terms of biological role, catalyzes the ADP transfer from ATP to D-glycero-beta-D-manno-heptose 1-phosphate, yielding ADP-D-glycero-beta-D-manno-heptose. The chain is Bifunctional protein HldE from Photobacterium profundum (strain SS9).